A 442-amino-acid chain; its full sequence is Adenylosuccinate synthetase (442 aa).

Residues Gly25–Lys31, Gly53–Thr55, and Lys62 contribute to the GTP site. Asp26 functions as the Proton acceptor in the catalytic mechanism. Asp26 and Gly53 together coordinate Mg(2+). IMP-binding positions include Asp26–Lys29 and Asn51–His54. His54 acts as the Proton donor in catalysis. IMP is bound by residues Thr141, Arg155, Asn232, and Thr247. Thr307 serves as a coordination point for GTP. Thr307–Arg313 provides a ligand contact to substrate. Arg311 contacts IMP. GTP-binding positions include Arg313, Lys339–Asp341, and Gly425–Gly427.

This sequence belongs to the adenylosuccinate synthetase family. In terms of assembly, homodimer. It depends on Mg(2+) as a cofactor.

The protein resides in the cytoplasm. It catalyses the reaction IMP + L-aspartate + GTP = N(6)-(1,2-dicarboxyethyl)-AMP + GDP + phosphate + 2 H(+). The protein operates within purine metabolism; AMP biosynthesis via de novo pathway; AMP from IMP: step 1/2. Its activity is regulated as follows. Inhibited by hadacidin. Activated by fructose 1,6-bisphosphate. In terms of biological role, plays an important role in the salvage pathway for purine nucleotide biosynthesis. Catalyzes the first committed step in the biosynthesis of AMP from IMP. This chain is Adenylosuccinate synthetase (Adss), found in Plasmodium falciparum.